Reading from the N-terminus, the 265-residue chain is MLMQSIYLSKIREQNPLIHNITNIVAANFSANGLLALGASPLMSANVEEMQEVPKISQALVINIGTLIGKDREAMLQAGKTANEVGIPVVLDPVGVGATSYRRETIRELLAEVKFALIRGNAGELAAIAGETWQAKGVDAGQGEVDLKAVAEKVAQRYGCTVLISGAVDIVSDGTQTATVHNGTSLFPKVTASGCLLSAVCAAFLAVSEGNYFSATLEACVAYTIAGECAAQGLTTQVGQFQIRLLDELAALSPETIGQRGRINE.

Position 43 (M43) interacts with substrate. ATP is bound by residues R119 and S165. A192 contributes to the substrate binding site.

It belongs to the Thz kinase family. The cofactor is Mg(2+).

The catalysed reaction is 5-(2-hydroxyethyl)-4-methylthiazole + ATP = 4-methyl-5-(2-phosphooxyethyl)-thiazole + ADP + H(+). It functions in the pathway cofactor biosynthesis; thiamine diphosphate biosynthesis; 4-methyl-5-(2-phosphoethyl)-thiazole from 5-(2-hydroxyethyl)-4-methylthiazole: step 1/1. Catalyzes the phosphorylation of the hydroxyl group of 4-methyl-5-beta-hydroxyethylthiazole (THZ). This chain is Hydroxyethylthiazole kinase, found in Haemophilus influenzae (strain ATCC 51907 / DSM 11121 / KW20 / Rd).